Consider the following 295-residue polypeptide: Transcriptional regulator SirC (295 aa).

The HTH araC/xylS-type domain maps to 195–292 (EKVYNIIISD…KITPLSFMRT (98 aa)). 2 DNA-binding regions (H-T-H motif) span residues 212–233 (AEVA…AAEE) and 259–282 (ISQV…KRHF).

Positive regulator of the expression of the invasion-associated type III secretion system encoded within SPI-1 (pathogenicity island 1). This Salmonella typhimurium (strain SL1344) protein is Transcriptional regulator SirC (sirC).